The chain runs to 662 residues: A-kinase anchor protein 10, mitochondrial (662 aa).

The N-terminal 28 residues, 1–28 (MRGAGPSPRQSPRTLRPDPGPAMSFFRR), are a transit peptide targeting the mitochondrion. Residues 1–55 (MRGAGPSPRQSPRTLRPDPGPAMSFFRRKVKGKEQEKTSDVKSIKASISVHSPQK) form a disordered region. A compositionally biased stretch (basic and acidic residues) spans 32-43 (GKEQEKTSDVKS). Phosphoserine occurs at positions 52 and 189. RGS domains are found at residues 125-369 (TLEQ…CKYQ) and 379-505 (YLAD…YKYL). Over residues 261 to 280 (SMETQESSSTLTVASRNSPA) the composition is skewed to polar residues. The segment at 261-282 (SMETQESSSTLTVASRNSPASP) is disordered. Residue Ser-281 is modified to Phosphoserine. Positions 524–548 (LTAPGSVGPPDESHPGSSDSSASQS) are disordered. A PKA-RII subunit binding region spans residues 634 to 647 (LAWKIAKMIVSDIM).

The protein localises to the mitochondrion. Its subcellular location is the membrane. It localises to the cytoplasm. Differentially targeted protein that binds to type I and II regulatory subunits of protein kinase A and anchors them to the mitochondria or the plasma membrane. Although the physiological relevance between PKA and AKAPS with mitochondria is not fully understood, one idea is that BAD, a proapoptotic member, is phosphorylated and inactivated by mitochondria-anchored PKA. It cannot be excluded too that it may facilitate PKA as well as G protein signal transduction, by acting as an adapter for assembling multiprotein complexes. With its RGS domain, it could lead to the interaction to G-alpha proteins, providing a link between the signaling machinery and the downstream kinase. The sequence is that of A-kinase anchor protein 10, mitochondrial (AKAP10) from Homo sapiens (Human).